Here is a 205-residue protein sequence, read N- to C-terminus: FAS-associated death domain protein (205 aa).

The region spanning 3 to 81 (PFLVLLHSLS…RHDLLQRLDD (79 aa)) is the DED domain. The Death domain maps to 97–181 (LQVAFDIVCD…LVADLVEEAQ (85 aa)). A disordered region spans residues 181-205 (QESVSKSENMSPVLRDSTVSSSETP). A Phosphoserine modification is found at S191.

As to quaternary structure, can self-associate. Component of the AIM2 PANoptosome complex, a multiprotein complex that drives inflammatory cell death (PANoptosis). Component of the death-induced signaling complex (DISC) composed of cell surface receptor FAS/CD95 or TNFRSF1A, adapter protein FADD and the CASP8 protease; recruitment of CASP8 to the complex is required for processing of CASP8 into the p18 and p10 subunits. Interacts (via death domain) with FAS (via death domain). Interacts directly (via DED domain) with NOL3 (via CARD domain); inhibits death-inducing signaling complex (DISC) assembly by inhibiting the increase in FAS-FADD binding induced by FAS activation. Interacts with CFLAR, PEA15 and MBD4. When phosphorylated, part of a complex containing HIPK3 and FAS. May interact with MAVS/IPS1. Interacts with MOCV v-CFLAR protein and PIDD1. Interacts with RIPK1 and TRADD. Interacts with stimulated TNFRSF10B. Interacts with DDX24.

It is found in the cytoplasm. Its function is as follows. Apoptotic adapter molecule that recruits caspases CASP8 or CASP10 to the activated FAS/CD95 or TNFRSF1A/TNFR-1 receptors. The resulting aggregate called the death-inducing signaling complex (DISC) performs CASP8 proteolytic activation. Active CASP8 initiates the subsequent cascade of caspases mediating apoptosis. Involved in interferon-mediated antiviral immune response, playing a role in the positive regulation of interferon signaling. The chain is FAS-associated death domain protein from Mus musculus (Mouse).